The primary structure comprises 70 residues: Sec-independent protein translocase protein TatA (70 aa).

Residues 1 to 21 form a helical membrane-spanning segment; sequence MFGLGGQELILILLIILLLFG. A compositionally biased stretch (basic and acidic residues) spans 50-62; the sequence is FNKVVDEPPRKTP. The disordered stretch occupies residues 50–70; sequence FNKVVDEPPRKTPENSTGSKS.

The protein belongs to the TatA/E family. Forms a complex with TatC.

The protein resides in the cell inner membrane. Functionally, part of the twin-arginine translocation (Tat) system that transports large folded proteins containing a characteristic twin-arginine motif in their signal peptide across membranes. TatA could form the protein-conducting channel of the Tat system. This chain is Sec-independent protein translocase protein TatA, found in Chlorobium limicola (strain DSM 245 / NBRC 103803 / 6330).